A 292-amino-acid polypeptide reads, in one-letter code: MAQITAALVKELREKTSAGIMDAKKALVETNGNMEKAIDVLKERGVAKAAKKADRVAAEGMTDVIEAGNTAAIIELNSETDFVASNEKFLNLLHLTAKVILEHKPADLKAALAIPVEEGTLNDQIVQTSAHTGEKITLRRFNVVEKNDNQTFGVYSHMGGQISVITLLENSDSTTAKDIAMHIAAIAPKYLSREDVPKDVVEHEKSIQMKADDLGNKPDNIKEKIVEGRLGKFLDELALLNQPFVKGEGESVAEYLKKQGATIKSFIRYQVGEGIEKQESNLADEVAKQING.

The segment at 80 to 83 is involved in Mg(2+) ion dislocation from EF-Tu; that stretch reads TDFV.

Belongs to the EF-Ts family.

It localises to the cytoplasm. Its function is as follows. Associates with the EF-Tu.GDP complex and induces the exchange of GDP to GTP. It remains bound to the aminoacyl-tRNA.EF-Tu.GTP complex up to the GTP hydrolysis stage on the ribosome. The sequence is that of Elongation factor Ts from Oenococcus oeni (strain ATCC BAA-331 / PSU-1).